A 118-amino-acid polypeptide reads, in one-letter code: Large ribosomal subunit protein uL18 (118 aa).

It belongs to the universal ribosomal protein uL18 family. In terms of assembly, part of the 50S ribosomal subunit; part of the 5S rRNA/L5/L18/L25 subcomplex. Contacts the 5S and 23S rRNAs.

Functionally, this is one of the proteins that bind and probably mediate the attachment of the 5S RNA into the large ribosomal subunit, where it forms part of the central protuberance. This chain is Large ribosomal subunit protein uL18, found in Rickettsia typhi (strain ATCC VR-144 / Wilmington).